The sequence spans 348 residues: D-erythrose-4-phosphate dehydrogenase (348 aa).

Residues 12–13 and arginine 81 contribute to the NAD(+) site; that span reads RI. Substrate-binding positions include 154 to 156, arginine 200, 213 to 214, and arginine 236; these read SCT and TK. Cysteine 155 functions as the Nucleophile in the catalytic mechanism. Asparagine 318 serves as a coordination point for NAD(+).

Belongs to the glyceraldehyde-3-phosphate dehydrogenase family. Epd subfamily. In terms of assembly, homotetramer.

It is found in the cytoplasm. The catalysed reaction is D-erythrose 4-phosphate + NAD(+) + H2O = 4-phospho-D-erythronate + NADH + 2 H(+). It functions in the pathway cofactor biosynthesis; pyridoxine 5'-phosphate biosynthesis; pyridoxine 5'-phosphate from D-erythrose 4-phosphate: step 1/5. Its function is as follows. Catalyzes the NAD-dependent conversion of D-erythrose 4-phosphate to 4-phosphoerythronate. The protein is D-erythrose-4-phosphate dehydrogenase of Salmonella paratyphi A (strain ATCC 9150 / SARB42).